A 115-amino-acid polypeptide reads, in one-letter code: UPF0102 protein Kole_1919 (115 aa).

This sequence belongs to the UPF0102 family.

In Kosmotoga olearia (strain ATCC BAA-1733 / DSM 21960 / TBF 19.5.1), this protein is UPF0102 protein Kole_1919.